The following is a 1103-amino-acid chain: Activity-dependent neuroprotector homeobox protein (1103 aa).

Residues Lys-39 and Lys-72 each participate in a glycyl lysine isopeptide (Lys-Gly) (interchain with G-Cter in SUMO2) cross-link. The C2H2-type 1; degenerate zinc finger occupies 74–97 (FCCSACPFSSKFFSAYKSHFRNVH). Phosphoserine is present on Ser-98. The segment at 107–129 (LNCPYCTFNADKKTLETHIKIFH) adopts a C2H2-type 2; degenerate zinc-finger fold. Residues 133-154 (SSAPSSSLSTFKDKNKNDGLKP) are disordered. The segment covering 143 to 154 (FKDKNKNDGLKP) has biased composition (basic and acidic residues). Glycyl lysine isopeptide (Lys-Gly) (interchain with G-Cter in SUMO2) cross-links involve residues Lys-144 and Lys-155. A C2H2-type 3; degenerate zinc finger spans residues 165–188 (YYCKKCTYRDPLYEIVRKHIYREH). Residues Lys-203, Lys-231, Lys-266, Lys-274, Lys-278, Lys-279, Lys-311, and Lys-335 each participate in a glycyl lysine isopeptide (Lys-Gly) (interchain with G-Cter in SUMO2) cross-link. A C2H2-type 4; degenerate zinc finger spans residues 221–244 (IHCKRCLFMPKSYEALVQHVIEDH). An Asymmetric dimethylarginine modification is found at Arg-348. A neuroprotective peptide (NAP) region spans residues 354 to 361 (NAPVSIPQ). The disordered stretch occupies residues 360–439 (PQQSQSVKQL…PAATGPPPSN (80 aa)). Residues Lys-367 and Lys-408 each participate in a glycyl lysine isopeptide (Lys-Gly) (interchain with G-Cter in SUMO2) cross-link. Residues 393 to 423 (SLQTANTSSLPPGQVKSPSVSQSQASRVLGQ) are compositionally biased toward polar residues. Residues Ser-409 and Ser-413 each carry the phosphoserine modification. A Glycyl lysine isopeptide (Lys-Gly) (interchain with G-Cter in SUMO2) cross-link involves residue Lys-427. Positions 427-438 (KPPPAATGPPPS) are enriched in pro residues. A C2H2-type 5; atypical zinc finger spans residues 447–469 (KICTICNELFPENVYSVHFEKEH). 2 consecutive C2H2-type zinc fingers follow at residues 489–510 (SKCL…MLIH) and 512–535 (LSCP…RMVH). Residues Lys-600 and Lys-606 each participate in a glycyl lysine isopeptide (Lys-Gly) (interchain with G-Cter in SUMO2) cross-link. The residue at position 608 (Ser-608) is a Phosphoserine. Glycyl lysine isopeptide (Lys-Gly) (interchain with G-Cter in SUMO2) cross-links involve residues Lys-616, Lys-621, Lys-632, and Lys-658. A C2H2-type 8; atypical zinc finger spans residues 622–647 (TLCPLCFSILKGPISDALAHHLRERH). A C2H2-type 9; atypical zinc finger spans residues 662–686 (YKCIHCLGVYTSNMTASTITLHLVH). Residues 691-712 (GKTQNGQDKTNAPSRLNQSPGL) are disordered. Positions 692 to 710 (KTQNGQDKTNAPSRLNQSP) are enriched in polar residues. Residue Lys-699 forms a Glycyl lysine isopeptide (Lys-Gly) (interchain with G-Cter in SUMO2) linkage. Phosphoserine is present on Ser-709. Residues Lys-716, Lys-728, and Lys-731 each participate in a glycyl lysine isopeptide (Lys-Gly) (interchain with G-Cter in SUMO2) cross-link. Ser-738 carries the post-translational modification Phosphoserine. Residue Lys-745 forms a Glycyl lysine isopeptide (Lys-Gly) (interchain with G-Cter in SUMO2) linkage. The homeobox DNA-binding region spans 754–814 (LDPKGHEDDS…SNKRKKCVRD (61 aa)). Ser-805 is modified (phosphoserine). Glycyl lysine isopeptide (Lys-Gly) (interchain with G-Cter in SUMO2) cross-links involve residues Lys-807, Lys-829, and Lys-835. Residues 873–1029 (DSFSDSFEHL…VQDDTEQLKW (157 aa)) are disordered. A phosphoserine mark is found at Ser-876, Ser-878, Ser-886, Ser-889, and Ser-905. Glycyl lysine isopeptide (Lys-Gly) (interchain with G-Cter in SUMO2) cross-links involve residues Lys-914, Lys-929, and Lys-936. Residues 922–954 (ESEKLDQKEEEDGSKYETIHLTEERAKLMHDAS) are compositionally biased toward basic and acidic residues. Phosphoserine occurs at positions 954 and 956. Residues 972–982 (PSESGPGSRQV) show a composition bias toward polar residues. Lys-1017 participates in a covalent cross-link: Glycyl lysine isopeptide (Lys-Gly) (interchain with G-Cter in SUMO2). Lys-1036 and Lys-1043 each carry N6-acetyllysine; alternate. Glycyl lysine isopeptide (Lys-Gly) (interchain with G-Cter in SUMO2); alternate cross-links involve residues Lys-1036 and Lys-1043. Residues 1045 to 1103 (QSQWENASENAERLPNPQIEWQNSTIDSEDGEQFDSMTDGVADPMHGSLTGVKLSSQQA) form a disordered region. Position 1072 is a phosphoserine (Ser-1072).

Interacts (via N-terminal region) with beta-catenin/CTNNB1 (via the central armadillo domains); interaction is direct and stabilizes CTNNB1 by modulating its phosphorylation by glycogen synthase kinase-3 beta GSK3B.

Its subcellular location is the nucleus. It localises to the chromosome. May be involved in transcriptional regulation. May mediate some of the neuroprotective peptide VIP-associated effects involving normal growth and cancer proliferation. Positively modulates WNT-beta-catenin/CTNN1B signaling, acting by regulating phosphorylation of, and thereby stabilizing, CTNNB1. May be required for neural induction and neuronal differentiation. May be involved in erythroid differentiation. The chain is Activity-dependent neuroprotector homeobox protein (Adnp) from Rattus norvegicus (Rat).